Consider the following 674-residue polypeptide: Linear primary-alkylsulfatase (674 aa).

The N-terminal stretch at 1–41 (MKLNALSTATHGSRSSPVKLWKFSTSFLLAASIIVSGQSWA) is a signal peptide. Zn(2+) is bound by residues His-192, His-194, Asp-196, His-197, Glu-303, and Glu-322. Sulfate is bound by residues 330–335 (NTYSLR) and Arg-340. His-367 contributes to the Zn(2+) binding site. Position 428 (Tyr-428) interacts with sulfate.

It belongs to the metallo-beta-lactamase superfamily. Type III sulfatase family. Homodimer. The cofactor is Zn(2+).

It localises to the periplasm. It catalyses the reaction a primary linear alkyl sulfate ester + H2O = a primary alcohol + sulfate + H(+). Inhibited by EDTA. Slightly activated in the presence of Ca(2+). Alkylsulfatase that cleaves primary alkyl sulfates such as sodium octyl sulfate and the widely used detergent sodium dodecyl sulfate (SDS). In Pseudomonas sp, this protein is Linear primary-alkylsulfatase.